The following is a 188-amino-acid chain: dCTP deaminase (188 aa).

Residues 111–116 (KSTYAR), 135–137 (TLE), Gln-156, Tyr-170, and Gln-180 each bind dCTP. The Proton donor/acceptor role is filled by Glu-137.

Belongs to the dCTP deaminase family. As to quaternary structure, homotrimer.

It carries out the reaction dCTP + H2O + H(+) = dUTP + NH4(+). The protein operates within pyrimidine metabolism; dUMP biosynthesis; dUMP from dCTP (dUTP route): step 1/2. In terms of biological role, catalyzes the deamination of dCTP to dUTP. The sequence is that of dCTP deaminase from Pseudomonas putida (strain GB-1).